A 91-amino-acid chain; its full sequence is Antifungal protein opdH (91 aa).

The N-terminal stretch at 1-18 (MQFSSLSLVFLAVIGAIA) is a signal peptide. Positions 19–33 (NPIAVDSELENRDVQ) are excised as a propeptide. Cystine bridges form between cysteine 41-cysteine 69, cysteine 48-cysteine 76, and cysteine 61-cysteine 87.

Belongs to the antifungal protein pafB family.

Its subcellular location is the secreted. It is found in the host cytoplasm. Its function is as follows. Antifungal protein; part of the gene cluster that mediates the biosynthesis of oxopyrrolidines, polyketide-amino acid hybrid compounds with feature structures of tetramic acid. Acts as an inhibitor of growth of various molds and yeasts. The chain is Antifungal protein opdH from Penicillium oxalicum (strain 114-2 / CGMCC 5302) (Penicillium decumbens).